A 336-amino-acid polypeptide reads, in one-letter code: UPF0065 protein in tcbD-tcbE intergenic region (336 aa).

Residues 1 to 32 form the signal peptide; it reads MHSSKCPDLANIGRRRVLAGIALAMTTSSTRA.

It belongs to the UPF0065 (bug) family.

It localises to the periplasm. This Pseudomonas sp. (strain P51) protein is UPF0065 protein in tcbD-tcbE intergenic region.